The following is a 665-amino-acid chain: Methionine--tRNA ligase (665 aa).

The 'HIGH' region signature appears at 12-22 (YYPSGKLHIGS). Positions 308–312 (KMSKS) match the 'KMSKS' region motif. Residue lysine 311 coordinates ATP. Residues 562 to 665 (TFDAVEIRVA…PSVPNGSIIG (104 aa)) enclose the tRNA-binding domain.

The protein belongs to the class-I aminoacyl-tRNA synthetase family. MetG type 2B subfamily. In terms of assembly, homodimer.

The protein localises to the cytoplasm. The enzyme catalyses tRNA(Met) + L-methionine + ATP = L-methionyl-tRNA(Met) + AMP + diphosphate. Functionally, is required not only for elongation of protein synthesis but also for the initiation of all mRNA translation through initiator tRNA(fMet) aminoacylation. This Streptococcus pyogenes serotype M6 (strain ATCC BAA-946 / MGAS10394) protein is Methionine--tRNA ligase (metG).